The primary structure comprises 279 residues: S-methyl-5'-thioadenosine phosphorylase (279 aa).

Phosphate is bound by residues Ser13, 55-56 (RH), and 88-89 (TA). Met191 lines the substrate pocket. Residue Thr192 participates in phosphate binding. Position 215–217 (215–217 (DYD)) interacts with substrate.

This sequence belongs to the PNP/MTAP phosphorylase family. MTAP subfamily. As to quaternary structure, homotrimer.

Its subcellular location is the cytoplasm. It is found in the nucleus. It carries out the reaction S-methyl-5'-thioadenosine + phosphate = 5-(methylsulfanyl)-alpha-D-ribose 1-phosphate + adenine. The protein operates within amino-acid biosynthesis; L-methionine biosynthesis via salvage pathway; S-methyl-5-thio-alpha-D-ribose 1-phosphate from S-methyl-5'-thioadenosine (phosphorylase route): step 1/1. Its function is as follows. Catalyzes the reversible phosphorylation of S-methyl-5'-thioadenosine (MTA) to adenine and 5-methylthioribose-1-phosphate. Involved in the breakdown of MTA, a major by-product of polyamine biosynthesis. Responsible for the first step in the methionine salvage pathway after MTA has been generated from S-adenosylmethionine. Has broad substrate specificity with 6-aminopurine nucleosides as preferred substrates. The sequence is that of S-methyl-5'-thioadenosine phosphorylase from Aedes aegypti (Yellowfever mosquito).